The chain runs to 510 residues: ATP synthase subunit alpha (510 aa).

169-176 (GDRQTGKT) contacts ATP.

The protein belongs to the ATPase alpha/beta chains family. As to quaternary structure, F-type ATPases have 2 components, CF(1) - the catalytic core - and CF(0) - the membrane proton channel. CF(1) has five subunits: alpha(3), beta(3), gamma(1), delta(1), epsilon(1). CF(0) has three main subunits: a(1), b(2) and c(9-12). The alpha and beta chains form an alternating ring which encloses part of the gamma chain. CF(1) is attached to CF(0) by a central stalk formed by the gamma and epsilon chains, while a peripheral stalk is formed by the delta and b chains.

The protein localises to the cell inner membrane. The enzyme catalyses ATP + H2O + 4 H(+)(in) = ADP + phosphate + 5 H(+)(out). Produces ATP from ADP in the presence of a proton gradient across the membrane. The alpha chain is a regulatory subunit. This chain is ATP synthase subunit alpha, found in Nitrobacter winogradskyi (strain ATCC 25391 / DSM 10237 / CIP 104748 / NCIMB 11846 / Nb-255).